We begin with the raw amino-acid sequence, 833 residues long: G-type lectin S-receptor-like serine/threonine-protein kinase RKS1 (833 aa).

The first 18 residues, 1–18 (MKVVFVIFFFFLFQFCIS), serve as a signal peptide directing secretion. One can recognise a Bulb-type lectin domain in the interval 19 to 144 (VDTIMRRQSL…VTGRSFWESF (126 aa)). Topologically, residues 19–440 (VDTIMRRQSL…NGLSGKRRVL (422 aa)) are extracellular. 6 N-linked (GlcNAc...) asparagine glycosylation sites follow: Asn79, Asn92, Asn100, Asn109, Asn228, and Asn256. The region spanning 280–330 (PKEQCDNYAHCGPNGYCDSPSSKTFECTCLPGFEPKFPRHWFLRDSSGGCT) is the EGF-like domain. 3 cysteine pairs are disulfide-bonded: Cys284–Cys296, Cys290–Cys306, and Cys308–Cys329. Residues 338-421 (CSEKDGFVKL…SGQDFYIRVD (84 aa)) form the PAN domain. 2 N-linked (GlcNAc...) asparagine glycosylation sites follow: Asn363 and Asn376. Cystine bridges form between Cys369-Cys396 and Cys373-Cys379. A helical transmembrane segment spans residues 441–461 (LILISLIAAVMLLTVILFCVV). Topologically, residues 462–833 (RERRKSNRHR…DVTFSDIQGR (372 aa)) are cytoplasmic. Positions 515–800 (FSSQNKLGAG…NLPNPKHPAF (286 aa)) constitute a Protein kinase domain. ATP is bound by residues 521-529 (LGAGGFGPV) and Lys543. Phosphoserine is present on residues Ser549 and Ser564. Residues 604–621 (EQRAELDWPKRMEIVRGI) are caM-binding. The active-site Proton acceptor is the Asp640. 2 positions are modified to phosphoserine: Ser644 and Ser657. A Phosphothreonine modification is found at Thr674. 2 positions are modified to phosphoserine: Ser717 and Ser821.

It belongs to the protein kinase superfamily. Ser/Thr protein kinase family.

It is found in the cell membrane. It carries out the reaction L-seryl-[protein] + ATP = O-phospho-L-seryl-[protein] + ADP + H(+). The enzyme catalyses L-threonyl-[protein] + ATP = O-phospho-L-threonyl-[protein] + ADP + H(+). The polypeptide is G-type lectin S-receptor-like serine/threonine-protein kinase RKS1 (RKS1) (Arabidopsis thaliana (Mouse-ear cress)).